The chain runs to 651 residues: Tudor domain-containing protein 3 (651 aa).

Residues 147–189 form a disordered region; that stretch reads TKTFGGGGGGVRSHLNIGAGGHRNREVSQKEKASKSESKNEGV. Basic and acidic residues predominate over residues 169–189; sequence RNREVSQKEKASKSESKNEGV. Positions 193–233 constitute a UBA domain; the sequence is LVDEKALKHITEMGFSKEASRQALMDNANNLEAALNVLLNS. 3 disordered regions span residues 234–272, 306–371, and 384–459; these read SKQKPVVGPPPRGRGKGRGRVRSEDEEDLGNARPSAPST, TEQN…DVWA, and YDRT…RKSR. Phosphoserine is present on Ser-256. The segment covering 321 to 338 has biased composition (basic and acidic residues); sequence PRNDPRQPRNEKPPRFQR. Residues 339–352 are compositionally biased toward polar residues; that stretch reads DTPNLKSALENSVL. The residue at position 345 (Ser-345) is a Phosphoserine. Residue Lys-470 forms a Glycyl lysine isopeptide (Lys-Gly) (interchain with G-Cter in SUMO2) linkage. Residues 555–615 form the Tudor domain; that stretch reads MWKPGDECFA…KPVQTEAWEE (61 aa). Residues 624-633 are compositionally biased toward basic and acidic residues; that stretch reads EFRRGGDGQP. Residues 624 to 651 form a disordered region; it reads EFRRGGDGQPRRSTRPTQQFYQPPRARN. Residues 631-651 form an EBM motif; may mediate interaction with the EJC region; sequence GQPRRSTRPTQQFYQPPRARN.

Component of mRNA stress granules. Interacts with FMR1, FXR1, FXR2, EWSR1, FUS, SERBP1, EEF1A1 and DDX3X or DDX3Y, and with the small nuclear ribonucleoprotein-associated proteins SNRPB and SNRPN. Interacts with 'Lys-48'-linked tetra-ubiquitin, but not with monoubiquitin or 'Lys-63'-linked ubiquitin chains. May interact with the exon junction complex (EJC) composed at least of CASC3, EIF4A3, MAGOH and RBM8A. Interacts with POLR2A (via the C-terminal domain (CTD)).

It is found in the cytoplasm. The protein resides in the nucleus. Functionally, scaffolding protein that specifically recognizes and binds dimethylarginine-containing proteins. Plays a role in the regulation of translation of target mRNAs by binding Arg/Gly-rich motifs (GAR) in dimethylarginine-containing proteins. In nucleus, acts as a coactivator: recognizes and binds asymmetric dimethylation on the core histone tails associated with transcriptional activation (H3R17me2a and H4R3me2a) and recruits proteins at these arginine-methylated loci. In cytoplasm, acts as an antiviral factor that participates in the assembly of stress granules together with G3BP1. This Rattus norvegicus (Rat) protein is Tudor domain-containing protein 3 (Tdrd3).